Here is a 256-residue protein sequence, read N- to C-terminus: Triosephosphate isomerase (256 aa).

Position 12-14 (12-14) interacts with substrate; the sequence is NWK. Residue His-99 is the Electrophile of the active site. Glu-171 acts as the Proton acceptor in catalysis. Substrate is bound by residues Gly-177, Ser-217, and 238–239; that span reads GG.

It belongs to the triosephosphate isomerase family. Homodimer.

It is found in the cytoplasm. The enzyme catalyses D-glyceraldehyde 3-phosphate = dihydroxyacetone phosphate. It participates in carbohydrate biosynthesis; gluconeogenesis. Its pathway is carbohydrate degradation; glycolysis; D-glyceraldehyde 3-phosphate from glycerone phosphate: step 1/1. Involved in the gluconeogenesis. Catalyzes stereospecifically the conversion of dihydroxyacetone phosphate (DHAP) to D-glyceraldehyde-3-phosphate (G3P). The chain is Triosephosphate isomerase from Rubrobacter xylanophilus (strain DSM 9941 / JCM 11954 / NBRC 16129 / PRD-1).